The chain runs to 230 residues: Probable fimbrial chaperone SfmC (230 aa).

The N-terminal stretch at 1 to 23 (MMTKIKLLMLIIFYLIISASAHA) is a signal peptide.

Belongs to the periplasmic pilus chaperone family.

It is found in the periplasm. In terms of biological role, part of the sfmACDHF fimbrial operon. Could contribute to adhesion to various surfaces in specific environmental niches. Increases adhesion to eukaryotic T24 bladder epithelial cells in the absence of fim genes. This is Probable fimbrial chaperone SfmC (sfmC) from Escherichia coli (strain K12).